We begin with the raw amino-acid sequence, 200 residues long: NADH-quinone oxidoreductase subunit C (200 aa).

The protein belongs to the complex I 30 kDa subunit family. NDH-1 is composed of 14 different subunits. Subunits NuoB, C, D, E, F, and G constitute the peripheral sector of the complex.

It localises to the cell inner membrane. It catalyses the reaction a quinone + NADH + 5 H(+)(in) = a quinol + NAD(+) + 4 H(+)(out). Functionally, NDH-1 shuttles electrons from NADH, via FMN and iron-sulfur (Fe-S) centers, to quinones in the respiratory chain. The immediate electron acceptor for the enzyme in this species is believed to be ubiquinone. Couples the redox reaction to proton translocation (for every two electrons transferred, four hydrogen ions are translocated across the cytoplasmic membrane), and thus conserves the redox energy in a proton gradient. The chain is NADH-quinone oxidoreductase subunit C from Ruegeria pomeroyi (strain ATCC 700808 / DSM 15171 / DSS-3) (Silicibacter pomeroyi).